The primary structure comprises 334 residues: Holliday junction branch migration complex subunit RuvB (334 aa).

A large ATPase domain (RuvB-L) region spans residues 1 to 182 (MDERLVSSEA…FGVLSRLEYY (182 aa)). ATP contacts are provided by residues leucine 21, arginine 22, glycine 63, lysine 66, threonine 67, threonine 68, 129–131 (EDF), arginine 172, tyrosine 182, and arginine 219. Mg(2+) is bound at residue threonine 67. Positions 183-253 (TQEELTDIVS…IAHDALERLQ (71 aa)) are small ATPAse domain (RuvB-S). The segment at 256 to 334 (ALGLDHIDHK…HFRLEAPARD (79 aa)) is head domain (RuvB-H). Positions 311 and 316 each coordinate DNA.

Belongs to the RuvB family. In terms of assembly, homohexamer. Forms an RuvA(8)-RuvB(12)-Holliday junction (HJ) complex. HJ DNA is sandwiched between 2 RuvA tetramers; dsDNA enters through RuvA and exits via RuvB. An RuvB hexamer assembles on each DNA strand where it exits the tetramer. Each RuvB hexamer is contacted by two RuvA subunits (via domain III) on 2 adjacent RuvB subunits; this complex drives branch migration. In the full resolvosome a probable DNA-RuvA(4)-RuvB(12)-RuvC(2) complex forms which resolves the HJ.

Its subcellular location is the cytoplasm. The catalysed reaction is ATP + H2O = ADP + phosphate + H(+). In terms of biological role, the RuvA-RuvB-RuvC complex processes Holliday junction (HJ) DNA during genetic recombination and DNA repair, while the RuvA-RuvB complex plays an important role in the rescue of blocked DNA replication forks via replication fork reversal (RFR). RuvA specifically binds to HJ cruciform DNA, conferring on it an open structure. The RuvB hexamer acts as an ATP-dependent pump, pulling dsDNA into and through the RuvAB complex. RuvB forms 2 homohexamers on either side of HJ DNA bound by 1 or 2 RuvA tetramers; 4 subunits per hexamer contact DNA at a time. Coordinated motions by a converter formed by DNA-disengaged RuvB subunits stimulates ATP hydrolysis and nucleotide exchange. Immobilization of the converter enables RuvB to convert the ATP-contained energy into a lever motion, pulling 2 nucleotides of DNA out of the RuvA tetramer per ATP hydrolyzed, thus driving DNA branch migration. The RuvB motors rotate together with the DNA substrate, which together with the progressing nucleotide cycle form the mechanistic basis for DNA recombination by continuous HJ branch migration. Branch migration allows RuvC to scan DNA until it finds its consensus sequence, where it cleaves and resolves cruciform DNA. The polypeptide is Holliday junction branch migration complex subunit RuvB (Bacillus velezensis (strain DSM 23117 / BGSC 10A6 / LMG 26770 / FZB42) (Bacillus amyloliquefaciens subsp. plantarum)).